Here is a 469-residue protein sequence, read N- to C-terminus: IME2-dependent-signaling protein (469 aa).

N-acetylmethionine is present on M1. Position 13 is a phosphothreonine (T13). 3 disordered regions span residues 22–55 (KSWS…PATM), 67–92 (ARGS…QQQQ), and 117–143 (DLTL…PPLT). Phosphoserine occurs at positions 23, 27, and 39. Composition is skewed to polar residues over residues 25–42 (SESQ…SPIG) and 67–82 (ARGS…GSSQ). S122, S130, S136, S147, and S148 each carry phosphoserine.

Seems to act indirectly to modify IME2 activity, thus permitting IME2 to carry out later meiotic functions. The chain is IME2-dependent-signaling protein (IDS2) from Saccharomyces cerevisiae (strain ATCC 204508 / S288c) (Baker's yeast).